The chain runs to 477 residues: Bifunctional protein HldE (477 aa).

The segment at 1–318 (MKVNLPAFER…ENAVRGRADT (318 aa)) is ribokinase. 195-198 (NLSE) is an ATP binding site. Asp264 is an active-site residue. The tract at residues 344–477 (MTNGVFDILH…IKKIQTESEK (134 aa)) is cytidylyltransferase.

In the N-terminal section; belongs to the carbohydrate kinase PfkB family. It in the C-terminal section; belongs to the cytidylyltransferase family. In terms of assembly, homodimer.

It catalyses the reaction D-glycero-beta-D-manno-heptose 7-phosphate + ATP = D-glycero-beta-D-manno-heptose 1,7-bisphosphate + ADP + H(+). The catalysed reaction is D-glycero-beta-D-manno-heptose 1-phosphate + ATP + H(+) = ADP-D-glycero-beta-D-manno-heptose + diphosphate. Its pathway is nucleotide-sugar biosynthesis; ADP-L-glycero-beta-D-manno-heptose biosynthesis; ADP-L-glycero-beta-D-manno-heptose from D-glycero-beta-D-manno-heptose 7-phosphate: step 1/4. The protein operates within nucleotide-sugar biosynthesis; ADP-L-glycero-beta-D-manno-heptose biosynthesis; ADP-L-glycero-beta-D-manno-heptose from D-glycero-beta-D-manno-heptose 7-phosphate: step 3/4. In terms of biological role, catalyzes the phosphorylation of D-glycero-D-manno-heptose 7-phosphate at the C-1 position to selectively form D-glycero-beta-D-manno-heptose-1,7-bisphosphate. Functionally, catalyzes the ADP transfer from ATP to D-glycero-beta-D-manno-heptose 1-phosphate, yielding ADP-D-glycero-beta-D-manno-heptose. This chain is Bifunctional protein HldE, found in Salmonella dublin (strain CT_02021853).